We begin with the raw amino-acid sequence, 356 residues long: Ion-translocating oxidoreductase complex subunit D (356 aa).

The next 4 helical transmembrane spans lie at 20 to 40, 42 to 62, 68 to 88, and 117 to 137; these read LMLL…WFFG, GVLV…ALAI, PVGF…IGVS, and GFNP…SFPV. At threonine 177 the chain carries FMN phosphoryl threonine. The next 5 membrane-spanning stretches (helical) occupy residues 205–225, 229–249, 259–279, 292–312, and 315–335; these read WASA…LYLL, VYTW…AALF, GSPL…FIVT, VIYG…GSSY, and GVAF…YYTT.

The protein belongs to the NqrB/RnfD family. In terms of assembly, the complex is composed of six subunits: RnfA, RnfB, RnfC, RnfD, RnfE and RnfG. Requires FMN as cofactor.

The protein resides in the cell inner membrane. Functionally, part of a membrane-bound complex that couples electron transfer with translocation of ions across the membrane. In Cellvibrio japonicus (strain Ueda107) (Pseudomonas fluorescens subsp. cellulosa), this protein is Ion-translocating oxidoreductase complex subunit D.